Here is a 191-residue protein sequence, read N- to C-terminus: Negative modulator of initiation of replication (191 aa).

Positions 96-97 (AV) are interaction with DNA.

This sequence belongs to the SeqA family. In terms of assembly, homodimer. Polymerizes to form helical filaments.

It is found in the cytoplasm. Functionally, negative regulator of replication initiation, which contributes to regulation of DNA replication and ensures that replication initiation occurs exactly once per chromosome per cell cycle. Binds to pairs of hemimethylated GATC sequences in the oriC region, thus preventing assembly of replication proteins and re-initiation at newly replicated origins. Repression is relieved when the region becomes fully methylated. In Shewanella amazonensis (strain ATCC BAA-1098 / SB2B), this protein is Negative modulator of initiation of replication.